Here is a 139-residue protein sequence, read N- to C-terminus: Small ribosomal subunit protein uS12 (139 aa).

Disordered regions lie at residues 1–22 (MPTI…SKSP) and 37–57 (KTPS…TPKK). The segment covering 9–19 (RKGRKSHKGKS) has biased composition (basic residues). Aspartate 102 carries the 3-methylthioaspartic acid modification.

This sequence belongs to the universal ribosomal protein uS12 family. In terms of assembly, part of the 30S ribosomal subunit. Contacts proteins S8 and S17. May interact with IF1 in the 30S initiation complex.

With S4 and S5 plays an important role in translational accuracy. In terms of biological role, interacts with and stabilizes bases of the 16S rRNA that are involved in tRNA selection in the A site and with the mRNA backbone. Located at the interface of the 30S and 50S subunits, it traverses the body of the 30S subunit contacting proteins on the other side and probably holding the rRNA structure together. The combined cluster of proteins S8, S12 and S17 appears to hold together the shoulder and platform of the 30S subunit. This is Small ribosomal subunit protein uS12 from Limosilactobacillus reuteri (strain DSM 20016) (Lactobacillus reuteri).